The following is a 94-amino-acid chain: Co-chaperonin GroES (94 aa).

It belongs to the GroES chaperonin family. As to quaternary structure, heptamer of 7 subunits arranged in a ring. Interacts with the chaperonin GroEL.

It is found in the cytoplasm. Together with the chaperonin GroEL, plays an essential role in assisting protein folding. The GroEL-GroES system forms a nano-cage that allows encapsulation of the non-native substrate proteins and provides a physical environment optimized to promote and accelerate protein folding. GroES binds to the apical surface of the GroEL ring, thereby capping the opening of the GroEL channel. The sequence is that of Co-chaperonin GroES from Lactobacillus helveticus (strain DPC 4571).